An 813-amino-acid polypeptide reads, in one-letter code: Leucine--tRNA ligase (813 aa).

Positions 41-51 (PYPSGTLHMGH) match the 'HIGH' region motif. Residues 575–579 (KMSKS) carry the 'KMSKS' region motif. ATP is bound at residue K578.

This sequence belongs to the class-I aminoacyl-tRNA synthetase family.

The protein resides in the cytoplasm. It carries out the reaction tRNA(Leu) + L-leucine + ATP = L-leucyl-tRNA(Leu) + AMP + diphosphate. The sequence is that of Leucine--tRNA ligase from Francisella tularensis subsp. tularensis (strain WY96-3418).